We begin with the raw amino-acid sequence, 460 residues long: NADH-ubiquinone oxidoreductase chain 4 (460 aa).

The next 13 helical transmembrane spans lie at 22 to 42, 59 to 79, 94 to 113, 117 to 139, 148 to 168, 195 to 215, 231 to 251, 258 to 278, 286 to 306, 310 to 330, 343 to 362, 394 to 414, and 436 to 456; these read WLWS…LSWF, IDPL…LMIL, RIYI…AFSA, ILFY…RWGN, TYFL…LLFM, FWWT…GVHL, ILAA…IIML, MAYP…SICL, MIAY…LIQT, FAGA…LFCL, LLLA…WWLL, ILLT…MFLM, and LLLT…ELIW.

The protein belongs to the complex I subunit 4 family.

Its subcellular location is the mitochondrion membrane. The catalysed reaction is a ubiquinone + NADH + 5 H(+)(in) = a ubiquinol + NAD(+) + 4 H(+)(out). Its function is as follows. Core subunit of the mitochondrial membrane respiratory chain NADH dehydrogenase (Complex I) that is believed to belong to the minimal assembly required for catalysis. Complex I functions in the transfer of electrons from NADH to the respiratory chain. The immediate electron acceptor for the enzyme is believed to be ubiquinone. The polypeptide is NADH-ubiquinone oxidoreductase chain 4 (MTND4) (Scyliorhinus canicula (Small-spotted catshark)).